A 329-amino-acid chain; its full sequence is Phosphate acetyltransferase (329 aa).

Belongs to the phosphate acetyltransferase and butyryltransferase family.

The protein localises to the cytoplasm. It carries out the reaction acetyl-CoA + phosphate = acetyl phosphate + CoA. Its pathway is metabolic intermediate biosynthesis; acetyl-CoA biosynthesis; acetyl-CoA from acetate: step 2/2. This Staphylococcus epidermidis (strain ATCC 35984 / DSM 28319 / BCRC 17069 / CCUG 31568 / BM 3577 / RP62A) protein is Phosphate acetyltransferase (pta).